A 107-amino-acid chain; its full sequence is High mobility group protein HMG-I/HMG-Y (107 aa).

The segment covering 1 to 13 has biased composition (polar residues); it reads MSESVSKSSQPLA. The disordered stretch occupies residues 1-107; the sequence is MSESVSKSSQ…ISQESSEEEQ (107 aa). An N-acetylserine modification is found at S2. K7 carries the N6-acetyllysine modification. S8 bears the ADP-ribosylserine mark. The residue at position 9 (S9) is an ADP-ribosylserine; alternate. S9 carries the post-translational modification Phosphoserine; alternate. K15 is modified (N6-acetyllysine; alternate). K15 participates in a covalent cross-link: Glycyl lysine isopeptide (Lys-Gly) (interchain with G-Cter in SUMO2); alternate. Positions 15–24 are enriched in basic and acidic residues; it reads KQEKDGTEKR. Positions 21 to 31 form a DNA-binding region, a.T hook 1; sequence TEKRGRGRPRK. R26 is modified (asymmetric dimethylarginine; alternate). R26 is subject to Omega-N-methylarginine; alternate. Position 26 is a symmetric dimethylarginine; alternate (R26). S36 is modified (phosphoserine; by HIPK2 and CDC2). Position 39 is a phosphothreonine (T39). Phosphoserine occurs at positions 44 and 49. T53 carries the phosphothreonine; by HIPK2 and CDC2 modification. 2 consecutive DNA-binding regions (a.T hook) follow at residues 53 to 63 and 78 to 89; these read TPKRPRGRPKG and TPGRKPRGRPKK. The interaction with HIPK2 stretch occupies residues 53–77; sequence TPKRPRGRPKGSKNKGTAKTRKVTT. The segment covering 55-74 has biased composition (basic residues); it reads KRPRGRPKGSKNKGTAKTRK. 2 positions are modified to asymmetric dimethylarginine; by PRMT6; alternate: R58 and R60. Omega-N-methylarginine; by PRMT6; alternate occurs at positions 58 and 60. Phosphothreonine; by HIPK2 and CDC2 is present on T78. The segment covering 93–107 has biased composition (acidic residues); it reads EEEEGISQESSEEEQ. Phosphoserine is present on residues S99, S102, and S103.

This sequence belongs to the HMGA family. As to quaternary structure, interacts with HIPK2. Isoforms HMG-I and HMG-Y can be phosphorylated by HIPK2. Phosphorylation may modulate DNA-binding affinity. Post-translationally, methylation at Arg-58 is mutually exclusive with methylation at Arg-60.

Its subcellular location is the nucleus. It localises to the chromosome. In terms of biological role, HMG-I/Y bind preferentially to the minor groove of A+T rich regions in double-stranded DNA. It is suggested that these proteins could function in nucleosome phasing and in the 3'-end processing of mRNA transcripts. They are also involved in the transcription regulation of genes containing, or in close proximity to A+T-rich regions. In Rattus norvegicus (Rat), this protein is High mobility group protein HMG-I/HMG-Y (Hmga1).